Consider the following 471-residue polypeptide: Tryptophanase (471 aa).

The residue at position 270 (K270) is an N6-(pyridoxal phosphate)lysine.

It belongs to the beta-eliminating lyase family. Homotetramer. Requires pyridoxal 5'-phosphate as cofactor.

The catalysed reaction is L-tryptophan + H2O = indole + pyruvate + NH4(+). The protein operates within amino-acid degradation; L-tryptophan degradation via pyruvate pathway; indole and pyruvate from L-tryptophan: step 1/1. In Histophilus somni (strain 2336) (Haemophilus somnus), this protein is Tryptophanase.